A 242-amino-acid chain; its full sequence is UDP-2,3-diacylglucosamine hydrolase (242 aa).

The Mn(2+) site is built by D7, H9, D40, N78, and H113. 78–79 (NR) contacts substrate. Positions 121, 159, 163, 166, and 194 each coordinate substrate. The Mn(2+) site is built by H194 and H196.

Belongs to the LpxH family. Mn(2+) serves as cofactor.

It localises to the cell inner membrane. The catalysed reaction is UDP-2-N,3-O-bis[(3R)-3-hydroxytetradecanoyl]-alpha-D-glucosamine + H2O = 2-N,3-O-bis[(3R)-3-hydroxytetradecanoyl]-alpha-D-glucosaminyl 1-phosphate + UMP + 2 H(+). Its pathway is glycolipid biosynthesis; lipid IV(A) biosynthesis; lipid IV(A) from (3R)-3-hydroxytetradecanoyl-[acyl-carrier-protein] and UDP-N-acetyl-alpha-D-glucosamine: step 4/6. Its function is as follows. Hydrolyzes the pyrophosphate bond of UDP-2,3-diacylglucosamine to yield 2,3-diacylglucosamine 1-phosphate (lipid X) and UMP by catalyzing the attack of water at the alpha-P atom. Involved in the biosynthesis of lipid A, a phosphorylated glycolipid that anchors the lipopolysaccharide to the outer membrane of the cell. The protein is UDP-2,3-diacylglucosamine hydrolase of Ectopseudomonas mendocina (strain ymp) (Pseudomonas mendocina).